Here is a 393-residue protein sequence, read N- to C-terminus: MSRTNYTFTSESVSEGHPDKVCDRISDAVLDALIAEEPEARVAAETFATTNRVVIGGEVGLSDQAKLKDYMGKIDEIARACIKDIGYEQDKFHHETVEITNLLHEQSAHIAQGVDAAGDKDEGAGDQGIMFGFATDETDALMPAPIQFSHAILRRLAEVRKNGTLPVLGPDAKSQISVRYDAGKPVEVTSLVLSTQHLDEKLTSADIRALVEPYIRETLPEGWLTDNTVWHVNPTGKFVIGGPDGDAGLTGRKIIVDTYGGAAPHGGGAFSGKDPTKVDRSAAYAARYLAKNVVAAGLAHKCTLQLSYAIGVAAPLSIYVNTHDTGAVPDENIETAIRKCMDLTPRGIRTHLGLNKPIYQRTAAYGHFGRAPEADGGFSWERTDLTEALKGAV.

Histidine 17 serves as a coordination point for ATP. Aspartate 19 contacts Mg(2+). Glutamate 45 contacts K(+). The L-methionine site is built by glutamate 58 and glutamine 106. The interval glutamine 106–alanine 116 is flexible loop. Residues aspartate 171–lysine 173, lysine 237–phenylalanine 238, aspartate 246, arginine 252–lysine 253, alanine 269, and lysine 273 each bind ATP. Aspartate 246 contributes to the L-methionine binding site. Lysine 277 is a binding site for L-methionine.

Belongs to the AdoMet synthase family. Homotetramer; dimer of dimers. Mg(2+) serves as cofactor. It depends on K(+) as a cofactor.

Its subcellular location is the cytoplasm. It carries out the reaction L-methionine + ATP + H2O = S-adenosyl-L-methionine + phosphate + diphosphate. It participates in amino-acid biosynthesis; S-adenosyl-L-methionine biosynthesis; S-adenosyl-L-methionine from L-methionine: step 1/1. Its function is as follows. Catalyzes the formation of S-adenosylmethionine (AdoMet) from methionine and ATP. The overall synthetic reaction is composed of two sequential steps, AdoMet formation and the subsequent tripolyphosphate hydrolysis which occurs prior to release of AdoMet from the enzyme. This is S-adenosylmethionine synthase from Ruegeria sp. (strain TM1040) (Silicibacter sp.).